Consider the following 647-residue polypeptide: Glutamyl-tRNA(Gln) amidotransferase subunit B, mitochondrial (647 aa).

The transit peptide at 1–16 directs the protein to the mitochondrion; it reads MARNLCRNVQTTPRPL. Residues 39–77 are disordered; that stretch reads PRPRYFGSSTAKSAKKKSNNKAYSGSSMSAGDASAGPSR. Residues 58–76 show a composition bias toward low complexity; the sequence is NKAYSGSSMSAGDASAGPS.

This sequence belongs to the GatB/GatE family. GatB subfamily. Subunit of the heterotrimeric GatCAB amidotransferase (AdT) complex, composed of A, B and C subunits.

It is found in the mitochondrion. The catalysed reaction is L-glutamyl-tRNA(Gln) + L-glutamine + ATP + H2O = L-glutaminyl-tRNA(Gln) + L-glutamate + ADP + phosphate + H(+). Functionally, allows the formation of correctly charged Gln-tRNA(Gln) through the transamidation of misacylated Glu-tRNA(Gln) in the mitochondria. The reaction takes place in the presence of glutamine and ATP through an activated gamma-phospho-Glu-tRNA(Gln). This Mycosarcoma maydis (Corn smut fungus) protein is Glutamyl-tRNA(Gln) amidotransferase subunit B, mitochondrial.